Here is a 145-residue protein sequence, read N- to C-terminus: Small ribosomal subunit protein uS15 (145 aa).

Belongs to the universal ribosomal protein uS15 family. Part of the 30S ribosomal subunit.

This is Small ribosomal subunit protein uS15 from Thermoplasma acidophilum (strain ATCC 25905 / DSM 1728 / JCM 9062 / NBRC 15155 / AMRC-C165).